A 198-amino-acid polypeptide reads, in one-letter code: Translation machinery-associated protein 22 (198 aa).

The 72-residue stretch at 99 to 170 (VIIKREARTK…EVETYIHSLL (72 aa)) folds into the SUI1 domain.

It belongs to the DENR family. Interacts with the 40S ribosomal subunit.

It localises to the cytoplasm. This chain is Translation machinery-associated protein 22 (TMA22), found in Saccharomyces cerevisiae (strain YJM789) (Baker's yeast).